We begin with the raw amino-acid sequence, 1317 residues long: DNA-directed RNA polymerase subunit beta' (1317 aa).

Zn(2+) contacts are provided by Cys-60, Cys-62, Cys-75, and Cys-78. A disordered region spans residues 183–209 (ELEDEGAKSDVKRKVRDGGEREMRQLR). The Mg(2+) site is built by Asp-535, Asp-537, and Asp-539. Zn(2+)-binding residues include Cys-890, Cys-967, Cys-974, and Cys-977.

Belongs to the RNA polymerase beta' chain family. As to quaternary structure, the RNAP catalytic core consists of 2 alpha, 1 beta, 1 beta' and 1 omega subunit. When a sigma factor is associated with the core the holoenzyme is formed, which can initiate transcription. Mg(2+) is required as a cofactor. The cofactor is Zn(2+).

The catalysed reaction is RNA(n) + a ribonucleoside 5'-triphosphate = RNA(n+1) + diphosphate. Functionally, DNA-dependent RNA polymerase catalyzes the transcription of DNA into RNA using the four ribonucleoside triphosphates as substrates. The polypeptide is DNA-directed RNA polymerase subunit beta' (Mycolicibacterium vanbaalenii (strain DSM 7251 / JCM 13017 / BCRC 16820 / KCTC 9966 / NRRL B-24157 / PYR-1) (Mycobacterium vanbaalenii)).